Consider the following 473-residue polypeptide: Aspartyl/glutamyl-tRNA(Asn/Gln) amidotransferase subunit B (473 aa).

Belongs to the GatB/GatE family. GatB subfamily. Heterotrimer of A, B and C subunits.

It carries out the reaction L-glutamyl-tRNA(Gln) + L-glutamine + ATP + H2O = L-glutaminyl-tRNA(Gln) + L-glutamate + ADP + phosphate + H(+). The catalysed reaction is L-aspartyl-tRNA(Asn) + L-glutamine + ATP + H2O = L-asparaginyl-tRNA(Asn) + L-glutamate + ADP + phosphate + 2 H(+). In terms of biological role, allows the formation of correctly charged Asn-tRNA(Asn) or Gln-tRNA(Gln) through the transamidation of misacylated Asp-tRNA(Asn) or Glu-tRNA(Gln) in organisms which lack either or both of asparaginyl-tRNA or glutaminyl-tRNA synthetases. The reaction takes place in the presence of glutamine and ATP through an activated phospho-Asp-tRNA(Asn) or phospho-Glu-tRNA(Gln). This is Aspartyl/glutamyl-tRNA(Asn/Gln) amidotransferase subunit B from Mycoplasmopsis synoviae (strain 53) (Mycoplasma synoviae).